Reading from the N-terminus, the 161-residue chain is Regulator of ribonuclease activity A (161 aa).

This sequence belongs to the RraA family. As to quaternary structure, homotrimer. Binds to both RNA-binding sites in the C-terminal region of Rne and to RhlB.

It localises to the cytoplasm. In terms of biological role, globally modulates RNA abundance by binding to RNase E (Rne) and regulating its endonucleolytic activity. Can modulate Rne action in a substrate-dependent manner by altering the composition of the degradosome. Modulates RNA-binding and helicase activities of the degradosome. The chain is Regulator of ribonuclease activity A from Enterobacter sp. (strain 638).